A 337-amino-acid polypeptide reads, in one-letter code: ATP-dependent 6-phosphofructokinase (337 aa).

Glycine 11 lines the ATP pocket. 21 to 25 (RAVVR) contributes to the ADP binding site. Residues 72-73 (RY) and 102-105 (GDGS) each bind ATP. Position 103 (aspartate 103) interacts with Mg(2+). 125-127 (TID) is a binding site for substrate. The Proton acceptor role is filled by aspartate 127. Arginine 154 serves as a coordination point for ADP. Substrate is bound by residues arginine 162 and 169 to 171 (MGR). ADP-binding positions include 185 to 187 (GAD), arginine 212, and 214 to 216 (KNH). Residues glutamate 223, arginine 245, and 251–254 (HILR) each bind substrate.

The protein belongs to the phosphofructokinase type A (PFKA) family. ATP-dependent PFK group I subfamily. Prokaryotic clade 'B1' sub-subfamily. In terms of assembly, homotetramer. Requires Mg(2+) as cofactor.

It is found in the cytoplasm. The enzyme catalyses beta-D-fructose 6-phosphate + ATP = beta-D-fructose 1,6-bisphosphate + ADP + H(+). It participates in carbohydrate degradation; glycolysis; D-glyceraldehyde 3-phosphate and glycerone phosphate from D-glucose: step 3/4. With respect to regulation, allosterically activated by ADP and other diphosphonucleosides, and allosterically inhibited by phosphoenolpyruvate. Functionally, catalyzes the phosphorylation of D-fructose 6-phosphate to fructose 1,6-bisphosphate by ATP, the first committing step of glycolysis. The polypeptide is ATP-dependent 6-phosphofructokinase (Streptococcus equi subsp. zooepidemicus (strain H70)).